Consider the following 124-residue polypeptide: Small ribosomal subunit protein uS12 (124 aa).

Position 89 is a 3-methylthioaspartic acid (Asp-89).

This sequence belongs to the universal ribosomal protein uS12 family. In terms of assembly, part of the 30S ribosomal subunit. Contacts proteins S8 and S17. May interact with IF1 in the 30S initiation complex.

In terms of biological role, with S4 and S5 plays an important role in translational accuracy. Its function is as follows. Interacts with and stabilizes bases of the 16S rRNA that are involved in tRNA selection in the A site and with the mRNA backbone. Located at the interface of the 30S and 50S subunits, it traverses the body of the 30S subunit contacting proteins on the other side and probably holding the rRNA structure together. The combined cluster of proteins S8, S12 and S17 appears to hold together the shoulder and platform of the 30S subunit. This is Small ribosomal subunit protein uS12 from Shewanella oneidensis (strain ATCC 700550 / JCM 31522 / CIP 106686 / LMG 19005 / NCIMB 14063 / MR-1).